A 191-amino-acid chain; its full sequence is CASP-like protein 2U3 (191 aa).

Residues 1–25 (MGAYDGAEAPRAAPASTAANSRPSR) lie on the Cytoplasmic side of the membrane. A helical transmembrane segment spans residues 26–46 (LLLLHSLLLRLVAVVVSILVI). The Extracellular portion of the chain corresponds to 47-68 (AVMVHAKQRVMIFKAEWDNSKA). A helical transmembrane segment spans residues 69-89 (FVALVAISAICLGYSFLQFIL). Residues 90–114 (SAFHLCSKSWKSPTKCWAWMNFIAD) lie on the Cytoplasmic side of the membrane. Residues 115–135 (QILTYAMLGAAAAAAELAYIA) form a helical membrane-spanning segment. The Extracellular portion of the chain corresponds to 136-157 (KNGSSRAQWQPICSTFNTFCTR). N137 carries N-linked (GlcNAc...) asparagine glycosylation. A helical membrane pass occupies residues 158–178 (AGASIILSFIAVLALANSSAI). Over 179-191 (SAYHLFRRPSSSV) the chain is Cytoplasmic.

This sequence belongs to the Casparian strip membrane proteins (CASP) family. Homodimer and heterodimers.

The protein resides in the cell membrane. This chain is CASP-like protein 2U3, found in Selaginella moellendorffii (Spikemoss).